The chain runs to 317 residues: Putative HTH-type transcriptional regulatory protein NP_1320A (317 aa).

Residues 132-189 form the HTH cro/C1-type domain; it reads LSDIRSQEDMSLGKLANELGVSRRTVSKYEDGMSASVEVAAELEEIFDRKLASPVEVL. Residues 143–162 constitute a DNA-binding region (H-T-H motif); that stretch reads LGKLANELGVSRRTVSKYED.

In Natronomonas pharaonis (strain ATCC 35678 / DSM 2160 / CIP 103997 / JCM 8858 / NBRC 14720 / NCIMB 2260 / Gabara) (Halobacterium pharaonis), this protein is Putative HTH-type transcriptional regulatory protein NP_1320A.